The following is a 429-amino-acid chain: DNA primase DnaG (429 aa).

The Toprim domain maps to 172 to 246 (DSIIVVEGRN…DVDFIARAPP (75 aa)). Glu-178, Asp-220, and Asp-222 together coordinate Mg(2+). The tract at residues 287 to 322 (RNTKELEERQGNELKNERPEKINENEESEKNVELKE) is disordered.

It belongs to the archaeal DnaG primase family. Forms a ternary complex with MCM helicase and DNA. Component of the archaeal exosome complex. Mg(2+) serves as cofactor.

It catalyses the reaction ssDNA + n NTP = ssDNA/pppN(pN)n-1 hybrid + (n-1) diphosphate.. Functionally, RNA polymerase that catalyzes the synthesis of short RNA molecules used as primers for DNA polymerase during DNA replication. Also part of the exosome, which is a complex involved in RNA degradation. Acts as a poly(A)-binding protein that enhances the interaction between heteromeric, adenine-rich transcripts and the exosome. This Picrophilus torridus (strain ATCC 700027 / DSM 9790 / JCM 10055 / NBRC 100828 / KAW 2/3) protein is DNA primase DnaG.